Reading from the N-terminus, the 646-residue chain is Long-chain fatty acid transport protein 1 (646 aa).

The Extracellular segment spans residues 1–13 (MRAPGAGTASVAS). The helical transmembrane segment at 14–34 (LALLWFLGLPWTWSAAAAFCV) threads the bilayer. Residues 35–646 (YVGGGGWRFL…ARICAGDFSL (612 aa)) are Cytoplasmic-facing. The interval 191 to 475 (EVSEQLGKSL…YVSDSATNKK (285 aa)) is sufficient for oligomerization. 246 to 257 (YIYTSGTTGLPK) serves as a coordination point for AMP.

This sequence belongs to the ATP-dependent AMP-binding enzyme family. In terms of assembly, self-associates. May function as a homodimer. Interacts with EPRS1; mediates the translocation of SLC27A1 from the cytoplasm to the plasma membrane thereby increasing the uptake of long-chain fatty acids. Interacts with DGAT2 and this interaction is enhanced in the presence of ZFYVE1. In terms of tissue distribution, higher expression in white adipose tissue than in heart. Highest expression in skeletal muscle, heart and fat. Lower levels in brain, kidney, lung, liver and testis. No expression in spleen or intestine.

It is found in the cell membrane. The protein resides in the mitochondrion outer membrane. It localises to the endomembrane system. Its subcellular location is the cytoplasm. The catalysed reaction is a fatty acid(in) = a fatty acid(out). The enzyme catalyses (9Z)-octadecenoate(out) = (9Z)-octadecenoate(in). It carries out the reaction hexadecanoate(out) = hexadecanoate(in). It catalyses the reaction (5Z,8Z,11Z,14Z)-eicosatetraenoate(out) = (5Z,8Z,11Z,14Z)-eicosatetraenoate(in). The catalysed reaction is (9Z,12Z)-octadecadienoate(out) = (9Z,12Z)-octadecadienoate(in). The enzyme catalyses a long-chain fatty acid + ATP + CoA = a long-chain fatty acyl-CoA + AMP + diphosphate. It carries out the reaction (5Z,8Z,11Z,14Z)-eicosatetraenoate + ATP + CoA = (5Z,8Z,11Z,14Z)-eicosatetraenoyl-CoA + AMP + diphosphate. It catalyses the reaction a very long-chain fatty acid + ATP + CoA = a very long-chain fatty acyl-CoA + AMP + diphosphate. The catalysed reaction is tetracosanoate + ATP + CoA = tetracosanoyl-CoA + AMP + diphosphate. Inhibited by Triacsin C. Both insulin and muscle contraction stimulate translocation to the plasma membrane in muscle, increasing fatty acid transport activity. Functionally, mediates the import of long-chain fatty acids (LCFA) into the cell by facilitating their transport at the plasma membrane. Also functions as an acyl-CoA ligase catalyzing the ATP-dependent formation of fatty acyl-CoA using LCFA and very-long-chain fatty acids (VLCFA) as substrates, which prevents fatty acid efflux from cells and might drive more fatty acid uptake. May act directly as a bona fide transporter, or alternatively, in a cytoplasmic or membrane-associated multimeric protein complex to trap and draw fatty acids towards accumulation. Plays a pivotal role in regulating available LCFA substrates from exogenous sources in tissues undergoing high levels of beta-oxidation or triglyceride synthesis. May be involved in regulation of cholesterol metabolism. Probably involved in fatty acid transport across the blood barrier. The polypeptide is Long-chain fatty acid transport protein 1 (Mus musculus (Mouse)).